A 309-amino-acid chain; its full sequence is ATP-dependent Clp protease proteolytic subunit 3, chloroplastic (309 aa).

The transit peptide at 1-70 (MEMSLRLASS…WDVSSFSIDS (70 aa)) directs the protein to the chloroplast. Val-71 carries the post-translational modification N-acetylvaline. Ser-164 serves as the catalytic Nucleophile. Residue His-189 is part of the active site. Thr-194 carries the post-translational modification Phosphothreonine. The disordered stretch occupies residues 290–309 (DNTNLPSERSMTQNGYAAIE). Polar residues predominate over residues 292-309 (TNLPSERSMTQNGYAAIE).

This sequence belongs to the peptidase S14 family. As to quaternary structure, component of the chloroplastic Clp protease core complex which consist of at least 16 proteins: CLPP4 (3 copies), CLPP5 (3 copies), CLPR4 (2 copies), ClpP1 (1 copy), CLPP6 (1 copy), CLPR2 (1 copy), CLPT1 (1 copy), CLPT2 (1 copy) and 3 copies of CLPP3 and/or CLPR1 and/or CLPR3. The core complex is organized in two heptameric rings, one containing CLPP3,4,5,6 in a 1:2:3:1 ratio and the other CLPP1 and CLPR1,2,3,4 in a 3:1:1:1:1 ratio. Interacts with CHIP. Post-translationally, ubiquitinated in vitro by CHIP. Mostly expressed in leaves. Also detected in stems, and to a lower extent, in roots (at protein level).

The protein localises to the plastid. The protein resides in the chloroplast stroma. The catalysed reaction is Hydrolysis of proteins to small peptides in the presence of ATP and magnesium. alpha-casein is the usual test substrate. In the absence of ATP, only oligopeptides shorter than five residues are hydrolyzed (such as succinyl-Leu-Tyr-|-NHMec, and Leu-Tyr-Leu-|-Tyr-Trp, in which cleavage of the -Tyr-|-Leu- and -Tyr-|-Trp bonds also occurs).. Its function is as follows. Cleaves peptides in various proteins in a process that requires ATP hydrolysis. Has a chymotrypsin-like activity. Plays a major role in the degradation of misfolded proteins. In the absence of CLPP3, modified ClpPR core(s) could be formed, albeit at strongly reduced levels. The chain is ATP-dependent Clp protease proteolytic subunit 3, chloroplastic from Arabidopsis thaliana (Mouse-ear cress).